The sequence spans 334 residues: Meso-diaminopimelate D-dehydrogenase (334 aa).

NADP(+) contacts are provided by residues 16–19 (YGNL), 40–42 (TRR), 75–78 (CSGS), 98–100 (GFD), and 127–131 (CGWDP). Residues Asp-100, Asp-130, Trp-154, 160–161 (QG), Thr-179, Arg-205, His-255, and Asn-284 each bind substrate.

The protein belongs to the diaminopimelate dehydrogenase family. In terms of assembly, homodimer.

The catalysed reaction is meso-2,6-diaminopimelate + NADP(+) + H2O = (S)-2-amino-6-oxoheptanedioate + NH4(+) + NADPH + H(+). It functions in the pathway amino-acid biosynthesis; L-lysine biosynthesis via DAP pathway; DL-2,6-diaminopimelate from (S)-tetrahydrodipicolinate: step 1/1. Functionally, catalyzes the reversible NADPH-dependent reductive amination of L-2-amino-6-oxopimelate, the acyclic form of L-tetrahydrodipicolinate, to generate the meso compound, D,L-2,6-diaminopimelate. Probably plays a role in lysine biosynthesis. Exhibits a high substrate specificity for meso-2,6-diaminopimelate (m-DAP), since the activity with L,L-2,6-diaminopimelate is less than 5% of the activity observed with m-DAP. Can use NAD(+) only very poorly since the activity observed in the presence of NAD(+) is about 0.3% of that with NADP(+). This chain is Meso-diaminopimelate D-dehydrogenase (ddh), found in Acetivibrio thermocellus (strain ATCC 27405 / DSM 1237 / JCM 9322 / NBRC 103400 / NCIMB 10682 / NRRL B-4536 / VPI 7372) (Clostridium thermocellum).